The primary structure comprises 1117 residues: Protein cup (1117 aa).

Residues 1–106 (MQMAEAEQEN…PPPPPPLPTS (106 aa)) are disordered. Pro residues-rich tracts occupy residues 54 to 64 (YPPPPPPPTPV) and 95 to 104 (CAPPPPPPLP). Residues Ser263 and Ser270 each carry the phosphoserine modification. Residues 270–326 (SPRKQVASKEAVPEQQSSQVQQKRPPSTGIHKPGSLRAPKAVRPTTAPVVSSKPVKS) form a disordered region. The span at 283–294 (EQQSSQVQQKRP) shows a compositional bias: polar residues. The short motif at 327–333 (YTRSRLM) is the YXXXXLphi motif 1 element. 2 positions are modified to phosphoserine: Ser347 and Ser350. A YXXXXLphi motif 2 motif is present at residues 363 to 369 (ELEGRLR). Disordered stretches follow at residues 493 to 528 (ISSQ…EDLS), 596 to 618 (KEGN…KMDH), 654 to 673 (TEHQ…SFQF), 679 to 728 (SQQN…SSSS), 984 to 1004 (GAKH…QARP), and 1016 to 1051 (ISGG…FQSF). Thr503 carries the phosphothreonine modification. Residues Ser509, Ser513, Ser520, Ser523, and Ser524 each carry the phosphoserine modification. Composition is skewed to low complexity over residues 679-712 (SQQN…NTNN) and 988-1001 (QAQQ…QQRQ).

This sequence belongs to the 4E-T/EIF4E-T family. Component of the osk RNP complex, which is composed of at least exu, yps, aret/bruno, cup, and the mRNA of osk. Interacts with the decapping activators me31B and tral. Component of the nanos RNP complex, which is composed of at least smg, cup, tral, me31B, the CCR4-NOT complex members Rga/NOT2 and Caf1, and the mRNA of nanos (nos). Interacts with btz. Recruited to the 3'-UTR of nos and osk mRNAs by smg and btz, respectively. Forms a ribonucleoprotein complex (RNP) containing at least me31B, eIF4E1, cup, tral and pAbp; this interaction is required for the translational silencing of maternal mRNAs during the maternal-to-zygotic transition. No interaction was detected with pAbp in 1-5 hour embryos. Interacts with osk and vas. Interacts with Pop2, twin/CCR4, Rga, Not3 and Not1 which are all core components of the CCR4-NOT deadenylase complex; interaction with the complex is required for cup deadenylation activity. Interacts with nanos. Interacts with smg. Interacts (via YXXXXLphi motifs) with eIF4E1; the interaction promotes retention of cup in the cytoplasm. Interacts with orb; the interaction represses the orb positive autoregulatory loop. Interacts with Nup154. Predominantly expressed in ovaries and in 0-2 hours old embryos. Weakly expressed in testis. Expressed in young embryos through stage 9, then it decreases throughout the rest of embryogenesis. In ovaries, it is expressed in germ cells throughout pre-vitellogenic development, but is not expressed in the somatic follicle cells. In germarial cysts, the protein (and not the transcripts) is transported selectively into the oocyte.

It is found in the cytoplasm. The protein localises to the nucleus. It localises to the cytoplasmic ribonucleoprotein granule. In terms of biological role, adapter protein that plays a central role in localization of transcripts in the oocyte and in young embryos. Maintains RNA targets in a repressed state by promoting their deadenylation and protects deadenylated mRNAs from further degradation. Binds to and recruits eIF-4E to the 3'-UTR of some mRNA targets which prevents interaction between eIF4E1 and eIF4G. This may contribute to translational repression but does not appear to be necessary for it to occur. Can promote translational repression independently of deadenylation and eIF4E1 binding. Required for correct localization of eIF4E1 in the developing oocyte. Required for translational repression of oskar (osk) mRNA. Also required for the translational repression of nanos (nos) mRNA. Promotes the accumulation of the germ plasm components osk, vas and stau at the posterior pole of the oocyte and is required for germ cell development. Represses orb positive autoregulatory activity which prevents premature activation of orb and ensures its accumulation specifically in the developing oocyte. In 0-1 hour embryos, forms a complex with me31B, cup, tral and pAbp which binds to various mRNAs including maternal mRNAs, and down-regulates their expression during the maternal-to-zygotic transition. This chain is Protein cup (cup), found in Drosophila melanogaster (Fruit fly).